Reading from the N-terminus, the 235-residue chain is Glutathione S-transferase L3 (235 aa).

The GST N-terminal domain occupies 27–108; sequence GTTRLYTSYV…YLDNTFEGPS (82 aa). Residues 37 to 38, 65 to 66, 79 to 80, and 92 to 93 contribute to the glutathione site; these read CP, NR, KV, and ES. The GST C-terminal domain maps to 86 to 230; sequence NGKIIGESLD…MDPKEIVEVF (145 aa).

Belongs to the GST superfamily. Lambda family.

The protein localises to the cytoplasm. The protein resides in the cytosol. The catalysed reaction is RX + glutathione = an S-substituted glutathione + a halide anion + H(+). In terms of biological role, catalyzes the glutathione-dependent reduction of S-glutathionylquercetin to quercetin. The sequence is that of Glutathione S-transferase L3 (GSTL3) from Arabidopsis thaliana (Mouse-ear cress).